The primary structure comprises 480 residues: Cytochrome b-c1 complex subunit 1, mitochondrial (480 aa).

The transit peptide at 1-34 (MAASVVCRAATAGAQVLLRARRSPALLRTPALRS) directs the protein to the mitochondrion. An N6-acetyllysine mark is found at Lys-111 and Lys-138. N6-acetyllysine; alternate is present on Lys-163. The residue at position 163 (Lys-163) is an N6-succinyllysine; alternate. Ser-212 is subject to Phosphoserine. Lys-248 is modified (N6-acetyllysine).

Belongs to the peptidase M16 family. UQCRC1/QCR1 subfamily. Component of the ubiquinol-cytochrome c oxidoreductase (cytochrome b-c1 complex, complex III, CIII), a multisubunit enzyme composed of 11 subunits. The complex is composed of 3 respiratory subunits cytochrome b, cytochrome c1 and Rieske protein UQCRFS1, 2 core protein subunits UQCRC1/QCR1 and UQCRC2/QCR2, and 6 low-molecular weight protein subunits UQCRH/QCR6, UQCRB/QCR7, UQCRQ/QCR8, UQCR10/QCR9, UQCR11/QCR10 and subunit 9, the cleavage product of Rieske protein UQCRFS1. The complex exists as an obligatory dimer and forms supercomplexes (SCs) in the inner mitochondrial membrane with NADH-ubiquinone oxidoreductase (complex I, CI) and cytochrome c oxidase (complex IV, CIV), resulting in different assemblies (supercomplex SCI(1)III(2)IV(1) and megacomplex MCI(2)III(2)IV(2)). Interacts with UQCC6. Interacts with STMP1. Expressed in brain, including substantia nigra, striatum, cortex and cerebellum, and in spinal cord, heart, kidney, liver and muscle.

It localises to the mitochondrion inner membrane. Functionally, component of the ubiquinol-cytochrome c oxidoreductase, a multisubunit transmembrane complex that is part of the mitochondrial electron transport chain which drives oxidative phosphorylation. The respiratory chain contains 3 multisubunit complexes succinate dehydrogenase (complex II, CII), ubiquinol-cytochrome c oxidoreductase (cytochrome b-c1 complex, complex III, CIII) and cytochrome c oxidase (complex IV, CIV), that cooperate to transfer electrons derived from NADH and succinate to molecular oxygen, creating an electrochemical gradient over the inner membrane that drives transmembrane transport and the ATP synthase. The cytochrome b-c1 complex catalyzes electron transfer from ubiquinol to cytochrome c, linking this redox reaction to translocation of protons across the mitochondrial inner membrane, with protons being carried across the membrane as hydrogens on the quinol. In the process called Q cycle, 2 protons are consumed from the matrix, 4 protons are released into the intermembrane space and 2 electrons are passed to cytochrome c. The 2 core subunits UQCRC1/QCR1 and UQCRC2/QCR2 are homologous to the 2 mitochondrial-processing peptidase (MPP) subunits beta-MPP and alpha-MPP respectively, and they seem to have preserved their MPP processing properties. May be involved in the in situ processing of UQCRFS1 into the mature Rieske protein and its mitochondrial targeting sequence (MTS)/subunit 9 when incorporated into complex III. Seems to play an important role in the maintenance of proper mitochondrial function in nigral dopaminergic neurons. The chain is Cytochrome b-c1 complex subunit 1, mitochondrial (UQCRC1) from Homo sapiens (Human).